Here is a 304-residue protein sequence, read N- to C-terminus: Probable actin-related protein 2/3 complex subunit 2 (304 aa).

It belongs to the ARPC2 family. Component of the Arp2/3 complex.

It is found in the cytoplasm. Its subcellular location is the cytoskeleton. Its function is as follows. Functions as actin-binding component of the Arp2/3 complex which is involved in regulation of actin polymerization and together with an activating nucleation-promoting factor (NPF) mediates the formation of branched actin networks. Seems to contact the mother actin filament. The sequence is that of Probable actin-related protein 2/3 complex subunit 2 (Arc-p34) from Anopheles gambiae (African malaria mosquito).